Reading from the N-terminus, the 354-residue chain is 3-dehydroquinate synthase (354 aa).

Residues 100–104 (GATGD), 124–125 (TT), Lys-136, Lys-145, and 163–166 (FLKT) contribute to the NAD(+) site. Zn(2+) contacts are provided by Glu-178, His-242, and His-256.

It belongs to the sugar phosphate cyclases superfamily. Dehydroquinate synthase family. NAD(+) serves as cofactor. Requires Co(2+) as cofactor. It depends on Zn(2+) as a cofactor.

It localises to the cytoplasm. The catalysed reaction is 7-phospho-2-dehydro-3-deoxy-D-arabino-heptonate = 3-dehydroquinate + phosphate. Its pathway is metabolic intermediate biosynthesis; chorismate biosynthesis; chorismate from D-erythrose 4-phosphate and phosphoenolpyruvate: step 2/7. Its function is as follows. Catalyzes the conversion of 3-deoxy-D-arabino-heptulosonate 7-phosphate (DAHP) to dehydroquinate (DHQ). The protein is 3-dehydroquinate synthase of Staphylococcus aureus (strain COL).